A 91-amino-acid polypeptide reads, in one-letter code: Potassium channel toxin Meg-beta-KTx1 (91 aa).

The N-terminal stretch at 1 to 19 (MQRNLVVLLFLGMVALSSC) is a signal peptide. Positions 20-27 (GLREKHFQ) are excised as a propeptide. The 38-residue stretch at 54–91 (QFGCPAYQGYCDDHCQDIKKQEGFCHGFKCKCGIPMGF) folds into the BetaSPN-type CS-alpha/beta domain. 3 disulfides stabilise this stretch: Cys-57/Cys-78, Cys-64/Cys-83, and Cys-68/Cys-85.

This sequence belongs to the long chain scorpion toxin family. Class 1 subfamily. In terms of tissue distribution, expressed by the venom gland.

Its subcellular location is the secreted. In terms of biological role, inhibits voltage-gated potassium channel. This Mesobuthus gibbosus (Mediterranean checkered scorpion) protein is Potassium channel toxin Meg-beta-KTx1.